Consider the following 328-residue polypeptide: dITP/XTP pyrophosphatase (328 aa).

The tract at residues 1 to 129 (MSEKIYEYKD…ATSEQGFGDI (129 aa)) is unknown. Positions 130 to 324 (ILIATRNEGK…KLMEVFPAWQ (195 aa)) are NTP pyrophosphatase. Residue 134–139 (TRNEGK) coordinates substrate. The Proton acceptor role is filled by Asp196. Position 196 (Asp196) interacts with Mg(2+). Residues Ser197, 280 to 283 (FGYD), Lys303, and 308 to 309 (HR) contribute to the substrate site.

This sequence belongs to the HAM1 NTPase family. Homodimer. Requires Mg(2+) as cofactor.

The enzyme catalyses XTP + H2O = XMP + diphosphate + H(+). The catalysed reaction is dITP + H2O = dIMP + diphosphate + H(+). It carries out the reaction ITP + H2O = IMP + diphosphate + H(+). Pyrophosphatase that catalyzes the hydrolysis of nucleoside triphosphates to their monophosphate derivatives, with a high preference for the non-canonical purine nucleotides XTP (xanthosine triphosphate), dITP (deoxyinosine triphosphate) and ITP. Seems to function as a house-cleaning enzyme that removes non-canonical purine nucleotides from the nucleotide pool, thus preventing their incorporation into DNA/RNA and avoiding chromosomal lesions. In Streptococcus pyogenes serotype M1, this protein is dITP/XTP pyrophosphatase.